The primary structure comprises 208 residues: Octanoyltransferase (208 aa).

Positions 31-208 (GSEREMVWLL…LKKEFYKVFA (178 aa)) constitute a BPL/LPL catalytic domain. Residues 70–77 (RGGKYSYH), 142–144 (AFG), and 155–157 (GVA) contribute to the substrate site. The active-site Acyl-thioester intermediate is Cys-173.

Belongs to the LipB family.

It is found in the cytoplasm. It carries out the reaction octanoyl-[ACP] + L-lysyl-[protein] = N(6)-octanoyl-L-lysyl-[protein] + holo-[ACP] + H(+). It functions in the pathway protein modification; protein lipoylation via endogenous pathway; protein N(6)-(lipoyl)lysine from octanoyl-[acyl-carrier-protein]: step 1/2. In terms of biological role, catalyzes the transfer of endogenously produced octanoic acid from octanoyl-acyl-carrier-protein onto the lipoyl domains of lipoate-dependent enzymes. Lipoyl-ACP can also act as a substrate although octanoyl-ACP is likely to be the physiological substrate. The chain is Octanoyltransferase from Anaplasma phagocytophilum (strain HZ).